A 259-amino-acid chain; its full sequence is NAD kinase (259 aa).

The Proton acceptor role is filled by Asp-43. Residues 43–44 (DG), 111–112 (NE), and Arg-136 contribute to the NAD(+) site.

It belongs to the NAD kinase family. It depends on a divalent metal cation as a cofactor.

Its subcellular location is the cytoplasm. The catalysed reaction is NAD(+) + ATP = ADP + NADP(+) + H(+). In terms of biological role, involved in the regulation of the intracellular balance of NAD and NADP, and is a key enzyme in the biosynthesis of NADP. Catalyzes specifically the phosphorylation on 2'-hydroxyl of the adenosine moiety of NAD to yield NADP. The protein is NAD kinase of Mycoplasma pneumoniae (strain ATCC 29342 / M129 / Subtype 1) (Mycoplasmoides pneumoniae).